The chain runs to 503 residues: Probable cytochrome P450 303a1 (503 aa).

Cys448 is a binding site for heme.

The protein belongs to the cytochrome P450 family. Heme serves as cofactor.

The protein localises to the endoplasmic reticulum membrane. Its subcellular location is the microsome membrane. In terms of biological role, may be involved in the metabolism of insect hormones and in the breakdown of synthetic insecticides. This Drosophila melanogaster (Fruit fly) protein is Probable cytochrome P450 303a1 (Cyp303a1).